The following is a 109-amino-acid chain: Flagellar hook-basal body complex protein FliE (109 aa).

This sequence belongs to the FliE family.

It is found in the bacterial flagellum basal body. This is Flagellar hook-basal body complex protein FliE from Stutzerimonas stutzeri (strain A1501) (Pseudomonas stutzeri).